The chain runs to 170 residues: Lipocalin Cav p 2.0101 (170 aa).

The N-terminal stretch at 1–16 (MMQILLLALAVSLACA) is a signal peptide. Disulfide bonds link C56–C60 and C75–C168.

It belongs to the calycin superfamily. Lipocalin family. Post-translationally, not N-linked glycosylated. As to expression, expressed in harderian gland (at protein level). Expressed in hair (at protein level). Expressed in submaxillary gland and harderian gland.

Its subcellular location is the secreted. This chain is Lipocalin Cav p 2.0101 (Lcncavp2), found in Cavia porcellus (Guinea pig).